Here is a 107-residue protein sequence, read N- to C-terminus: U1-lycotoxin-Ls1b (107 aa).

Positions 1–20 are cleaved as a signal peptide; the sequence is MMKVLVVVALLVTLISYSSS. A propeptide spanning residues 21-41 is cleaved from the precursor; the sequence is EGIDDLEADELSSLMANEQTR. 4 cysteine pairs are disulfide-bonded: cysteine 44–cysteine 59, cysteine 51–cysteine 68, cysteine 58–cysteine 86, and cysteine 70–cysteine 84.

It belongs to the neurotoxin 19 (CSTX) family. 04 (U1-Lctx) subfamily. Expressed by the venom gland.

It is found in the secreted. The sequence is that of U1-lycotoxin-Ls1b from Lycosa singoriensis (Wolf spider).